A 424-amino-acid chain; its full sequence is Phosphomethylpyrimidine synthase 2 (424 aa).

Residues asparagine 65, methionine 94, tyrosine 123, histidine 162, 184–186 (SRG), 225–228 (DGLR), and glutamate 264 each bind substrate. Histidine 268 is a Zn(2+) binding site. Tyrosine 291 contributes to the substrate binding site. Histidine 332 is a binding site for Zn(2+). Residues cysteine 408, cysteine 411, and cysteine 415 each coordinate [4Fe-4S] cluster.

Belongs to the ThiC family. [4Fe-4S] cluster is required as a cofactor.

It catalyses the reaction 5-amino-1-(5-phospho-beta-D-ribosyl)imidazole + S-adenosyl-L-methionine = 4-amino-2-methyl-5-(phosphooxymethyl)pyrimidine + CO + 5'-deoxyadenosine + formate + L-methionine + 3 H(+). It participates in cofactor biosynthesis; thiamine diphosphate biosynthesis. Catalyzes the synthesis of the hydroxymethylpyrimidine phosphate (HMP-P) moiety of thiamine from aminoimidazole ribotide (AIR) in a radical S-adenosyl-L-methionine (SAM)-dependent reaction. The protein is Phosphomethylpyrimidine synthase 2 of Methanothermobacter thermautotrophicus (strain ATCC 29096 / DSM 1053 / JCM 10044 / NBRC 100330 / Delta H) (Methanobacterium thermoautotrophicum).